A 544-amino-acid polypeptide reads, in one-letter code: CRISPR-associated endodeoxyribonuclease Cas12f2 (544 aa).

Positions 1–195 (MNMSKTTISV…KPNERETRYV (195 aa)) are recognition domain (REC). The interval 196-326 (HISKLESPSK…YLQYTYEAEV (131 aa)) is wedge domain (WED). Residues 327–334 (EANKEYAG) are linker. Residues 335–485 (CLGVDIGCSK…VYVKPDYTSQ (151 aa)) form a ruvC-I region. Active-site residues include Asp339 and Glu430. Residues 486–520 (TCSSCGADKEKTERPSQAIFRCLNPTCRYYQRDIN) are target nucleic acid-binding (TNB). Cys487, Cys490, Cys507, and Cys512 together coordinate Zn(2+). The ruvC-II stretch occupies residues 521–541 (ADFNAAVNIAKKALNNTEVVT). Asp522 is a catalytic residue.

It belongs to the CRISPR-associated endonuclease Cas12f family. As to quaternary structure, an asymmetric homodimer. Guide RNA is probably required for dimerization. It depends on Mg(2+) as a cofactor. The cofactor is Zn(2+).

Its function is as follows. CRISPR (clustered regularly interspaced short palindromic repeat), is an adaptive immune system that provides protection against mobile genetic elements (viruses, transposable elements and conjugative plasmids). CRISPR clusters contain sequences complementary to antecedent mobile elements and target invading nucleic acids. CRISPR clusters are transcribed and processed into CRISPR RNA (crRNA), which requires a trans-encoded small RNA (tracrRNA), but not this protein (in vitro). Recognizes a short motif in the CRISPR repeat sequences (the 5' PAM or protospacer adjacent motif, TTAT in this organism) to help distinguish self versus nonself, as targets within the CRISPR locus do not have PAMs. Upon expression in E.coli of this protein, a mini CRISPR array and the probable tracrRNA, has dsDNA endonuclease activity. DNA cleavage is centered around positions 21 base pairs 3' of PAM. The mini system does not protect E.coli against transformation by foreign plasmids. This Micrarchaeota archaeon (strain CG1_02_47_40) protein is CRISPR-associated endodeoxyribonuclease Cas12f2.